Consider the following 243-residue polypeptide: Small ribosomal subunit protein uS5 (243 aa).

Residues 1-10 show a composition bias toward basic and acidic residues; the sequence is MSDNETKETQ. The tract at residues 1–50 is disordered; the sequence is MSDNETKETQVAEETQNTVATESNNEDRKGRRGQRGEGRRGERRNRREEN. Residues 12–23 are compositionally biased toward polar residues; the sequence is AEETQNTVATES. Over residues 25–50 the composition is skewed to basic and acidic residues; it reads NEDRKGRRGQRGEGRRGERRNRREEN. The S5 DRBM domain maps to 55–118; sequence LLDRVVTINR…LDAKKHMFSV (64 aa).

The protein belongs to the universal ribosomal protein uS5 family. Part of the 30S ribosomal subunit. Contacts proteins S4 and S8.

Functionally, with S4 and S12 plays an important role in translational accuracy. Located at the back of the 30S subunit body where it stabilizes the conformation of the head with respect to the body. This is Small ribosomal subunit protein uS5 from Bifidobacterium longum (strain DJO10A).